A 498-amino-acid chain; its full sequence is Glycerol kinase (498 aa).

An ADP-binding site is contributed by T14. ATP-binding residues include T14, T15, and S16. Residue T14 coordinates sn-glycerol 3-phosphate. Position 18 (R18) interacts with ADP. Sn-glycerol 3-phosphate is bound by residues R84, E85, Y136, and D243. Glycerol-binding residues include R84, E85, Y136, D243, and Q244. Residues T265 and G308 each contribute to the ADP site. Residues T265, G308, Q312, and G409 each coordinate ATP. Positions 409 and 413 each coordinate ADP.

It belongs to the FGGY kinase family.

It carries out the reaction glycerol + ATP = sn-glycerol 3-phosphate + ADP + H(+). The protein operates within polyol metabolism; glycerol degradation via glycerol kinase pathway; sn-glycerol 3-phosphate from glycerol: step 1/1. Inhibited by fructose 1,6-bisphosphate (FBP). Its function is as follows. Key enzyme in the regulation of glycerol uptake and metabolism. Catalyzes the phosphorylation of glycerol to yield sn-glycerol 3-phosphate. This is Glycerol kinase from Shewanella frigidimarina (strain NCIMB 400).